The sequence spans 54 residues: Ovomucoid (54 aa).

One can recognise a Kazal-like domain in the interval 4 to 54; that stretch reads VDCSDYPRPDCTLEYMPLCGSDNKTYGNKCNFCNAVVDSNGTLTLSHFGKC. 3 disulfides stabilise this stretch: Cys6–Cys36, Cys14–Cys33, and Cys22–Cys54. Residue Asn43 is glycosylated (N-linked (GlcNAc...) asparagine).

It localises to the secreted. The protein is Ovomucoid of Dendrocygna eytoni (Plumed whistling-duck).